The primary structure comprises 149 residues: Large ribosomal subunit protein uL13 (149 aa).

Belongs to the universal ribosomal protein uL13 family. As to quaternary structure, part of the 50S ribosomal subunit.

This protein is one of the early assembly proteins of the 50S ribosomal subunit, although it is not seen to bind rRNA by itself. It is important during the early stages of 50S assembly. The chain is Large ribosomal subunit protein uL13 from Pelodictyon phaeoclathratiforme (strain DSM 5477 / BU-1).